Here is a 223-residue protein sequence, read N- to C-terminus: Small ribosomal subunit protein uS3 (223 aa).

The 79-residue stretch at 39 to 117 (IREFLRKKPS…RPELNAKLVA (79 aa)) folds into the KH type-2 domain.

Belongs to the universal ribosomal protein uS3 family. In terms of assembly, part of the 30S ribosomal subunit. Forms a tight complex with proteins S10 and S14.

Functionally, binds the lower part of the 30S subunit head. Binds mRNA in the 70S ribosome, positioning it for translation. The sequence is that of Small ribosomal subunit protein uS3 from Chlamydia abortus (strain DSM 27085 / S26/3) (Chlamydophila abortus).